Reading from the N-terminus, the 1430-residue chain is DNA-directed RNA polymerase subunit beta' (1430 aa).

Positions 70, 72, 85, and 88 each coordinate Zn(2+). Residues D495, D497, and D499 each coordinate Mg(2+). Zn(2+)-binding residues include C838, C912, C919, and C922.

This sequence belongs to the RNA polymerase beta' chain family. As to quaternary structure, the RNAP catalytic core consists of 2 alpha, 1 beta, 1 beta' and 1 omega subunit. When a sigma factor is associated with the core the holoenzyme is formed, which can initiate transcription. The cofactor is Mg(2+). Zn(2+) is required as a cofactor.

It carries out the reaction RNA(n) + a ribonucleoside 5'-triphosphate = RNA(n+1) + diphosphate. In terms of biological role, DNA-dependent RNA polymerase catalyzes the transcription of DNA into RNA using the four ribonucleoside triphosphates as substrates. The polypeptide is DNA-directed RNA polymerase subunit beta' (Rhodospirillum centenum (strain ATCC 51521 / SW)).